The primary structure comprises 198 residues: Superoxide dismutase [Fe] (198 aa).

Fe cation contacts are provided by His27, His74, Asp158, and His162.

It belongs to the iron/manganese superoxide dismutase family. In terms of assembly, homodimer. Fe cation is required as a cofactor.

It is found in the cytoplasm. The catalysed reaction is 2 superoxide + 2 H(+) = H2O2 + O2. Its function is as follows. Destroys superoxide anion radicals which are normally produced within the cells and which are toxic to biological systems. The polypeptide is Superoxide dismutase [Fe] (SODB) (Plasmodium falciparum (isolate 3D7)).